Reading from the N-terminus, the 246-residue chain is Caffeoyl-CoA O-methyltransferase 1 (246 aa).

Residue lysine 21 participates in substrate binding. S-adenosyl-L-methionine-binding positions include threonine 63, glutamate 85, 87–88, serine 93, aspartate 111, and alanine 140; that span reads GV. Aspartate 162 is a binding site for substrate. Aspartate 162 serves as a coordination point for a divalent metal cation. Position 164 (aspartate 164) interacts with S-adenosyl-L-methionine. Residues aspartate 188 and asparagine 189 each contribute to the a divalent metal cation site. Substrate is bound at residue asparagine 193.

This sequence belongs to the class I-like SAM-binding methyltransferase superfamily. Cation-dependent O-methyltransferase family. CCoAMT subfamily. The cofactor is a divalent metal cation.

The enzyme catalyses (E)-caffeoyl-CoA + S-adenosyl-L-methionine = (E)-feruloyl-CoA + S-adenosyl-L-homocysteine + H(+). It functions in the pathway aromatic compound metabolism; phenylpropanoid biosynthesis. Methylates caffeoyl-CoA to feruloyl-CoA and 5-hydroxyferuloyl-CoA to sinapoyl-CoA. Plays a role in the synthesis of feruloylated polysaccharides. Involved in the reinforcement of the plant cell wall. Also involved in the responding to wounding or pathogen challenge by the increased formation of cell wall-bound ferulic acid polymers. This chain is Caffeoyl-CoA O-methyltransferase 1 (CCOMT), found in Eucalyptus globulus (Tasmanian blue gum).